Here is a 168-residue protein sequence, read N- to C-terminus: Putative B3 domain-containing protein Os10g0158600 (168 aa).

Positions 4 to 97 (VVFASARLNA…KARVMLLNRQ (94 aa)) form a DNA-binding region, TF-B3. Residues 105–151 (KTPSTTSSDKNRSLSPSDQLTRASTSAHPSTSKSIPPLRNGTGSTKR) are disordered. The segment covering 106–138 (TPSTTSSDKNRSLSPSDQLTRASTSAHPSTSKS) has biased composition (polar residues).

The protein localises to the nucleus. The protein is Putative B3 domain-containing protein Os10g0158600 of Oryza sativa subsp. japonica (Rice).